Here is a 445-residue protein sequence, read N- to C-terminus: Ribosomal protein uS12 methylthiotransferase RimO (445 aa).

The MTTase N-terminal domain occupies 4 to 119 (IKVALVSLGC…LLESIKVFLK (116 aa)). [4Fe-4S] cluster is bound by residues Cys-13, Cys-48, Cys-82, Cys-156, Cys-160, and Cys-163. The 231-residue stretch at 142–372 (TTPTYTAYVR…MILQQSISKD (231 aa)) folds into the Radical SAM core domain. Positions 375–441 (KEKIGKIYEV…EYDLIGVVYN (67 aa)) constitute a TRAM domain.

The protein belongs to the methylthiotransferase family. RimO subfamily. [4Fe-4S] cluster serves as cofactor.

It localises to the cytoplasm. The enzyme catalyses L-aspartate(89)-[ribosomal protein uS12]-hydrogen + (sulfur carrier)-SH + AH2 + 2 S-adenosyl-L-methionine = 3-methylsulfanyl-L-aspartate(89)-[ribosomal protein uS12]-hydrogen + (sulfur carrier)-H + 5'-deoxyadenosine + L-methionine + A + S-adenosyl-L-homocysteine + 2 H(+). Its function is as follows. Catalyzes the methylthiolation of an aspartic acid residue of ribosomal protein uS12. The protein is Ribosomal protein uS12 methylthiotransferase RimO of Clostridium botulinum (strain Loch Maree / Type A3).